The following is an 878-amino-acid chain: E3 ubiquitin-protein ligase BRE1-like 1 (878 aa).

The tract at residues 1–21 (MASTGEPDRKRRHFSSISPSE) is disordered. Coiled coils occupy residues 48 to 76 (QNLK…IKEK), 200 to 261 (QLAL…ELQQ), 293 to 382 (SDRE…EKLQ), and 537 to 624 (LDMY…ILKS). The RING-type zinc-finger motif lies at 826–865 (CKACNDRPKEVVITKCYHLFCNPCVQKLTGTRQKKCPTCS).

The protein belongs to the BRE1 family. May act as a tetramer consisting of two copies of HUB1 and two copies of HUB2. Interacts with MED21. In terms of tissue distribution, ubiquitously expressed.

It localises to the nucleus. The enzyme catalyses S-ubiquitinyl-[E2 ubiquitin-conjugating enzyme]-L-cysteine + [acceptor protein]-L-lysine = [E2 ubiquitin-conjugating enzyme]-L-cysteine + N(6)-ubiquitinyl-[acceptor protein]-L-lysine.. It participates in protein modification; protein ubiquitination. In terms of biological role, E3 ubiquitin-protein ligase that monoubiquitinates H2B to form H2BK143ub1. H2BK143ub1 gives a specific tag for epigenetic transcriptional activation and is also prerequisite for H3K4me and maybe H3K79me. It thereby plays a central role in histone code and gene regulation. Forms a ubiquitin ligase complex in cooperation with the E2 enzyme UBC2/RAD6. Required for the regulation of flowering time and defense against necrotrophic fungal pathogens. Involved in the control of seed dormancy and germination. This chain is E3 ubiquitin-protein ligase BRE1-like 1 (HUB1), found in Arabidopsis thaliana (Mouse-ear cress).